Consider the following 190-residue polypeptide: Bifunctional D-Ala-D-Ala dipeptidase and D-Ala-D-Ala carboxypeptidase VanXYC (190 aa).

Residue glutamate 66 participates in Mg(2+) binding. A dipeptide is bound by residues glutamine 67, alanine 88, serine 93, histidine 95, and aspartate 102. The Cu(2+) site is built by histidine 95 and aspartate 102. Residues histidine 95 and aspartate 102 each contribute to the Zn(2+) site. The active-site catalytic acid/base residue is the glutamate 153. 2 residues coordinate a dipeptide: tryptophan 155 and histidine 156. Position 156 (histidine 156) interacts with Cu(2+). Histidine 156 is a Zn(2+) binding site.

This sequence belongs to the peptidase M15D family. Homodimer.

The protein localises to the cytoplasm. The enzyme catalyses D-alanyl-D-alanine + H2O = 2 D-alanine. The catalysed reaction is UDP-N-acetyl-alpha-D-muramoyl-L-alanyl-gamma-D-glutamyl-L-lysyl-D-alanyl-D-alanine + H2O = UDP-N-acetyl-alpha-D-muramoyl-L-alanyl-gamma-D-glutamyl-L-lysyl-D-alanine + D-alanine. In terms of biological role, bifunctional enzyme, exhibiting dipeptidase and carboxypeptidase activities. Catalyzes hydrolysis of the D-alanyl-D-alanine dipeptide. Cleaves the C-terminal D-alanine residue of UDP-muramyl-pentapeptide[Ala] (UDP-MurNAc-L-Ala-D-Glu-L-Lys-D-Ala-D-Ala). Shows no activity against the pentapeptide with a C-terminal D-serine residue. Together with VanC/VanC1 and VanT, required for vancomycin resistance in E.gallinarum strain BM4174. This Enterococcus gallinarum protein is Bifunctional D-Ala-D-Ala dipeptidase and D-Ala-D-Ala carboxypeptidase VanXYC.